A 318-amino-acid chain; its full sequence is Sol locus transcriptional repressor (318 aa).

TPR repeat units lie at residues Ala-65 to Thr-98, Ile-99 to Val-132, Gly-133 to Asn-166, and Ser-167 to Lys-199.

In terms of biological role, transcriptional repressor of the sol locus (adhE/aad, ctfA, ctfB and adc) genes for butanol and acetone formation. The protein is Sol locus transcriptional repressor (solR) of Clostridium acetobutylicum (strain ATCC 824 / DSM 792 / JCM 1419 / IAM 19013 / LMG 5710 / NBRC 13948 / NRRL B-527 / VKM B-1787 / 2291 / W).